Consider the following 240-residue polypeptide: MSKQRGTFSEVSLAQDPKWQQRKPKGNKSSISGTEQEIFQVELNLQNASLNHQGIDKIYDCQGLLPPPEKLTAEVLGIICIVLMATVLKTIVLIPFLEQNNSSPNARTQKARHCGHCPEEWITYSNSCYYIGKERRTWEESLQACASKNSSSLLCIDNEEEMKFLASILPSSWIGVFRNSSHHPWVTINGLAFKHEIKDSDHAERNCAMLHVRGLISDQCGSSRIIRRGFIMLTRLVLNS.

The segment covering 1–12 (MSKQRGTFSEVS) has biased composition (polar residues). Positions 1–31 (MSKQRGTFSEVSLAQDPKWQQRKPKGNKSSI) are disordered. Residues 1 to 70 (MSKQRGTFSE…CQGLLPPPEK (70 aa)) lie on the Cytoplasmic side of the membrane. Residues 71–93 (LTAEVLGIICIVLMATVLKTIVL) form a helical; Signal-anchor for type II membrane protein membrane-spanning segment. Topologically, residues 94-240 (IPFLEQNNSS…IMLTRLVLNS (147 aa)) are extracellular. An N-linked (GlcNAc...) asparagine glycan is attached at asparagine 100. Positions 116-230 (HCPEEWITYS…GSSRIIRRGF (115 aa)) constitute a C-type lectin domain. Cysteine 117 and cysteine 128 form a disulfide bridge. Asparagine 149 and asparagine 179 each carry an N-linked (GlcNAc...) asparagine glycan. Cysteine 207 and cysteine 220 are disulfide-bonded.

As to quaternary structure, can form disulfide-bonded heterodimer with CD94. Natural killer cells.

Its subcellular location is the membrane. Its function is as follows. Plays a role as a receptor for the recognition of MHC class I HLA-E molecules by NK cells and some cytotoxic T-cells. In Homo sapiens (Human), this protein is NKG2-E type II integral membrane protein (KLRC3).